The chain runs to 140 residues: MNIDEIKQILPHRFPMLLVDRIVEKSEDHAKAIKNVTASEIFFLGHFPAYPIYPGVLIIEGLAQTAGLMLLNRGESVIPVFAGIDNARFKSEVRPGDVLEYEVWLKERKLGMAKVEAIAKVQGKIVATATLLVGVRKNEK.

The active site involves histidine 46.

It belongs to the thioester dehydratase family. FabZ subfamily.

The protein localises to the cytoplasm. The enzyme catalyses a (3R)-hydroxyacyl-[ACP] = a (2E)-enoyl-[ACP] + H2O. Its function is as follows. Involved in unsaturated fatty acids biosynthesis. Catalyzes the dehydration of short chain beta-hydroxyacyl-ACPs and long chain saturated and unsaturated beta-hydroxyacyl-ACPs. This Pseudothermotoga lettingae (strain ATCC BAA-301 / DSM 14385 / NBRC 107922 / TMO) (Thermotoga lettingae) protein is 3-hydroxyacyl-[acyl-carrier-protein] dehydratase FabZ.